We begin with the raw amino-acid sequence, 78 residues long: Mandibular organ-inhibiting hormone 2 (78 aa).

3 cysteine pairs are disulfide-bonded: C7/C44, C24/C40, and C27/C53.

Belongs to the arthropod CHH/MIH/GIH/VIH hormone family. In terms of tissue distribution, produced by the medulla terminalis X-organ in the eyestalks and transported to the sinus gland where it is stored and released.

The protein resides in the secreted. Functionally, represses the synthesis of methyl farnesoate, the precursor of insect juvenile hormone III in the mandibular organ. The polypeptide is Mandibular organ-inhibiting hormone 2 (Cancer pagurus (Rock crab)).